The primary structure comprises 113 residues: Ig heavy chain V-III region ABE-47N (113 aa).

The 113-residue stretch at 1–113 folds into the Ig-like domain; the sequence is EVKLEESGGG…YWGQGTLVTV (113 aa). Cysteines 22 and 98 form a disulfide.

This Mus musculus (Mouse) protein is Ig heavy chain V-III region ABE-47N.